A 129-amino-acid chain; its full sequence is Large ribosomal subunit protein bL12 (129 aa).

It belongs to the bacterial ribosomal protein bL12 family. Homodimer. Part of the ribosomal stalk of the 50S ribosomal subunit. Forms a multimeric L10(L12)X complex, where L10 forms an elongated spine to which 2 to 4 L12 dimers bind in a sequential fashion. Binds GTP-bound translation factors.

Functionally, forms part of the ribosomal stalk which helps the ribosome interact with GTP-bound translation factors. Is thus essential for accurate translation. The sequence is that of Large ribosomal subunit protein bL12 from Synechococcus sp. (strain CC9605).